Consider the following 607-residue polypeptide: F-box protein At-B (607 aa).

Positions 9-47 (LAEEILKRLDLENLCSVACVSTTLRSAVVSGVLPSLTSL) constitute an F-box domain. LRR repeat units follow at residues 51–76 (VFSP…TLNC), 77–99 (LRLN…HLLR), 100–125 (CSLL…TLEM), 130–155 (SPDV…QLNI), 228–253 (LDLI…DLED), 262–286 (DNDL…SLVR), 295–320 (FKRI…RLGG), 321–346 (FPKV…EVRG), 347–372 (AFLL…RLST), 373–397 (CPLI…DLGS), 398–422 (CKSI…NLAG), 424–447 (DVTD…SLRG), 448–477 (CRRV…DLGH), 478–503 (MPGI…SIRS), 504–536 (CFHV…NVHN), and 537–563 (CVSL…GMGQ).

The protein is F-box protein At-B (ATB) of Arabidopsis thaliana (Mouse-ear cress).